The following is a 185-amino-acid chain: Translation initiation factor IF-3 (185 aa).

This sequence belongs to the IF-3 family. In terms of assembly, monomer.

The protein resides in the cytoplasm. IF-3 binds to the 30S ribosomal subunit and shifts the equilibrium between 70S ribosomes and their 50S and 30S subunits in favor of the free subunits, thus enhancing the availability of 30S subunits on which protein synthesis initiation begins. The sequence is that of Translation initiation factor IF-3 from Streptococcus pneumoniae serotype 19F (strain G54).